The chain runs to 310 residues: 1-aminocyclopropane-1-carboxylate oxidase 1 (310 aa).

The stretch at Glu113–Leu133 forms a coiled coil. Positions Pro158–Pro259 constitute a Fe2OG dioxygenase domain. Residues His182, Asp184, and His240 each coordinate Fe cation. Arg250 provides a ligand contact to 2-oxoglutarate.

Belongs to the iron/ascorbate-dependent oxidoreductase family. It depends on Fe(2+) as a cofactor.

The enzyme catalyses 1-aminocyclopropane-1-carboxylate + L-ascorbate + O2 = ethene + L-dehydroascorbate + hydrogen cyanide + CO2 + 2 H2O. It functions in the pathway alkene biosynthesis; ethylene biosynthesis via S-adenosyl-L-methionine; ethylene from S-adenosyl-L-methionine: step 2/2. Functionally, enzyme involved in the ethylene biosynthesis. May promote stem elongation by maximizing the extensibility cells, possibly by activating ethylene biosynthesis, in response to very-long-chain fatty acids (VLCFAs C20:0 to C30:0). The chain is 1-aminocyclopropane-1-carboxylate oxidase 1 (ACO1) from Arabidopsis thaliana (Mouse-ear cress).